The sequence spans 224 residues: Urease accessory protein UreF (224 aa).

The protein belongs to the UreF family. UreD, UreF and UreG form a complex that acts as a GTP-hydrolysis-dependent molecular chaperone, activating the urease apoprotein by helping to assemble the nickel containing metallocenter of UreC. The UreE protein probably delivers the nickel.

It is found in the cytoplasm. Functionally, required for maturation of urease via the functional incorporation of the urease nickel metallocenter. The polypeptide is Urease accessory protein UreF (Pseudomonas entomophila (strain L48)).